The following is a 382-amino-acid chain: Anhydro-N-acetylmuramic acid kinase (382 aa).

An ATP-binding site is contributed by 9–16 (GTSLDGID).

It belongs to the anhydro-N-acetylmuramic acid kinase family.

It catalyses the reaction 1,6-anhydro-N-acetyl-beta-muramate + ATP + H2O = N-acetyl-D-muramate 6-phosphate + ADP + H(+). Its pathway is amino-sugar metabolism; 1,6-anhydro-N-acetylmuramate degradation. It participates in cell wall biogenesis; peptidoglycan recycling. Catalyzes the specific phosphorylation of 1,6-anhydro-N-acetylmuramic acid (anhMurNAc) with the simultaneous cleavage of the 1,6-anhydro ring, generating MurNAc-6-P. Is required for the utilization of anhMurNAc either imported from the medium or derived from its own cell wall murein, and thus plays a role in cell wall recycling. In Bacillus cereus (strain AH187), this protein is Anhydro-N-acetylmuramic acid kinase.